Here is a 436-residue protein sequence, read N- to C-terminus: GTPase Der (436 aa).

2 consecutive EngA-type G domains span residues proline 4–glutamate 167 and isoleucine 176–serine 351. Residues glycine 10–serine 17, aspartate 57–isoleucine 61, asparagine 119–aspartate 122, glycine 182–serine 189, aspartate 229–methionine 233, and asparagine 294–aspartate 297 contribute to the GTP site. The KH-like domain maps to isoleucine 352–aspartate 436.

This sequence belongs to the TRAFAC class TrmE-Era-EngA-EngB-Septin-like GTPase superfamily. EngA (Der) GTPase family. Associates with the 50S ribosomal subunit.

In terms of biological role, GTPase that plays an essential role in the late steps of ribosome biogenesis. The polypeptide is GTPase Der (Bacillus cereus (strain G9842)).